Reading from the N-terminus, the 336-residue chain is Methionyl-tRNA formyltransferase (336 aa).

S110–P113 contributes to the (6S)-5,6,7,8-tetrahydrofolate binding site.

It belongs to the Fmt family.

The enzyme catalyses L-methionyl-tRNA(fMet) + (6R)-10-formyltetrahydrofolate = N-formyl-L-methionyl-tRNA(fMet) + (6S)-5,6,7,8-tetrahydrofolate + H(+). Attaches a formyl group to the free amino group of methionyl-tRNA(fMet). The formyl group appears to play a dual role in the initiator identity of N-formylmethionyl-tRNA by promoting its recognition by IF2 and preventing the misappropriation of this tRNA by the elongation apparatus. This is Methionyl-tRNA formyltransferase from Prochlorococcus marinus (strain NATL2A).